We begin with the raw amino-acid sequence, 338 residues long: Formimidoylglutamase (338 aa).

Residues His137, Asp166, His168, Asp170, Cys259, and Asp261 each coordinate Mn(2+).

This sequence belongs to the arginase family. It depends on Mn(2+) as a cofactor.

The catalysed reaction is N-formimidoyl-L-glutamate + H2O = formamide + L-glutamate. It functions in the pathway amino-acid degradation; L-histidine degradation into L-glutamate; L-glutamate from N-formimidoyl-L-glutamate (hydrolase route): step 1/1. Catalyzes the conversion of N-formimidoyl-L-glutamate to L-glutamate and formamide. The polypeptide is Formimidoylglutamase (Clostridium tetani (strain Massachusetts / E88)).